The chain runs to 587 residues: Phosphomethylpyrimidine synthase (587 aa).

Residues asparagine 218, methionine 247, tyrosine 276, histidine 312, serine 332–glycine 334, aspartate 373–arginine 376, and glutamate 412 contribute to the substrate site. Position 416 (histidine 416) interacts with Zn(2+). Tyrosine 439 contacts substrate. Zn(2+) is bound at residue histidine 480. Cysteine 560, cysteine 563, and cysteine 568 together coordinate [4Fe-4S] cluster.

The protein belongs to the ThiC family. The cofactor is [4Fe-4S] cluster.

It catalyses the reaction 5-amino-1-(5-phospho-beta-D-ribosyl)imidazole + S-adenosyl-L-methionine = 4-amino-2-methyl-5-(phosphooxymethyl)pyrimidine + CO + 5'-deoxyadenosine + formate + L-methionine + 3 H(+). It participates in cofactor biosynthesis; thiamine diphosphate biosynthesis. Its function is as follows. Catalyzes the synthesis of the hydroxymethylpyrimidine phosphate (HMP-P) moiety of thiamine from aminoimidazole ribotide (AIR) in a radical S-adenosyl-L-methionine (SAM)-dependent reaction. The polypeptide is Phosphomethylpyrimidine synthase (Porphyromonas gingivalis (strain ATCC BAA-308 / W83)).